We begin with the raw amino-acid sequence, 156 residues long: Small ribosomal subunit protein uS7 (156 aa).

Belongs to the universal ribosomal protein uS7 family. As to quaternary structure, part of the 30S ribosomal subunit. Contacts proteins S9 and S11.

In terms of biological role, one of the primary rRNA binding proteins, it binds directly to 16S rRNA where it nucleates assembly of the head domain of the 30S subunit. Is located at the subunit interface close to the decoding center, probably blocks exit of the E-site tRNA. This Beijerinckia indica subsp. indica (strain ATCC 9039 / DSM 1715 / NCIMB 8712) protein is Small ribosomal subunit protein uS7.